Reading from the N-terminus, the 193-residue chain is ATP-dependent Clp protease proteolytic subunit 2 (193 aa).

The Nucleophile role is filled by S98. H123 is a catalytic residue.

This sequence belongs to the peptidase S14 family. As to quaternary structure, fourteen ClpP subunits assemble into 2 heptameric rings which stack back to back to give a disk-like structure with a central cavity, resembling the structure of eukaryotic proteasomes.

The protein resides in the cytoplasm. It carries out the reaction Hydrolysis of proteins to small peptides in the presence of ATP and magnesium. alpha-casein is the usual test substrate. In the absence of ATP, only oligopeptides shorter than five residues are hydrolyzed (such as succinyl-Leu-Tyr-|-NHMec, and Leu-Tyr-Leu-|-Tyr-Trp, in which cleavage of the -Tyr-|-Leu- and -Tyr-|-Trp bonds also occurs).. In terms of biological role, cleaves peptides in various proteins in a process that requires ATP hydrolysis. Has a chymotrypsin-like activity. Plays a major role in the degradation of misfolded proteins. The protein is ATP-dependent Clp protease proteolytic subunit 2 of Bacillus cereus (strain ATCC 10987 / NRS 248).